A 91-amino-acid polypeptide reads, in one-letter code: Putative transmembrane protein encoded by LINC00862 (91 aa).

The helical transmembrane segment at 49 to 69 threads the bilayer; the sequence is IMALILMPSLHCFGNILILLF.

The protein localises to the membrane. The protein is Putative transmembrane protein encoded by LINC00862 (LINC00862) of Homo sapiens (Human).